Here is a 533-residue protein sequence, read N- to C-terminus: Neuropilin and tolloid-like protein 1 (533 aa).

The N-terminal stretch at 1–22 (MIYGRSLFHIIASLIILHSSGA) is a signal peptide. Residues 23–344 (TKKGTEKQIT…LDQLTNTSGT (322 aa)) lie on the Extracellular side of the membrane. Disulfide bonds link Cys41/Cys68, Cys96/Cys118, Cys172/Cys202, Cys229/Cys251, Cys292/Cys304, Cys299/Cys317, and Cys311/Cys326. CUB domains are found at residues 41 to 155 (CGTW…YNFT) and 172 to 287 (CEFE…FTSF). The region spanning 291 to 327 (PCEGNTFFCHSNMCINNTLVCNGLQNCVYPWDENHCK) is the LDL-receptor class A domain. Asn306 is a glycosylation site (N-linked (GlcNAc...) asparagine). Asn340 carries an N-linked (GlcNAc...) asparagine glycan. A helical membrane pass occupies residues 345-365 (VIGVTSCIVIILIIVSVIVQI). The Cytoplasmic segment spans residues 366–533 (KQPRKKYVQR…HESEYNTTRV (168 aa)). The residue at position 417 (Tyr417) is a Phosphotyrosine. The PDZ-binding signature appears at 531 to 533 (TRV).

In terms of assembly, interacts with PLZ domains of DLG2, DLG3 and DLG4 via its C-terminal TRV domain. Interacts with GRIN2A and GRIN2B via its CUB domains. In terms of tissue distribution, expressed only in brain. Present throughout the central nervous system. Highly expressed in the hippocampal CA3 region, olfactory bulb and tubercle, caudate putamen, and neocortex in the adult brain.

The protein localises to the membrane. It is found in the postsynaptic density membrane. In terms of biological role, involved in the development and/or maintenance of neuronal circuitry. Accessory subunit of the neuronal N-methyl-D-aspartate receptor (NMDAR) critical for maintaining the abundance of GRIN2A-containing NMDARs in the postsynaptic density. Regulates long-term NMDA receptor-dependent synaptic plasticity and cognition, at least in the context of spatial learning and memory. The sequence is that of Neuropilin and tolloid-like protein 1 (Neto1) from Mus musculus (Mouse).